A 616-amino-acid polypeptide reads, in one-letter code: Dihydroxy-acid dehydratase (616 aa).

D81 serves as a coordination point for Mg(2+). [2Fe-2S] cluster is bound at residue C122. Positions 123 and 124 each coordinate Mg(2+). Position 124 is an N6-carboxylysine (K124). C195 is a binding site for [2Fe-2S] cluster. E491 is a binding site for Mg(2+). The Proton acceptor role is filled by S517.

The protein belongs to the IlvD/Edd family. In terms of assembly, homodimer. The cofactor is [2Fe-2S] cluster. Mg(2+) serves as cofactor.

It catalyses the reaction (2R)-2,3-dihydroxy-3-methylbutanoate = 3-methyl-2-oxobutanoate + H2O. The enzyme catalyses (2R,3R)-2,3-dihydroxy-3-methylpentanoate = (S)-3-methyl-2-oxopentanoate + H2O. Its pathway is amino-acid biosynthesis; L-isoleucine biosynthesis; L-isoleucine from 2-oxobutanoate: step 3/4. It functions in the pathway amino-acid biosynthesis; L-valine biosynthesis; L-valine from pyruvate: step 3/4. Its function is as follows. Functions in the biosynthesis of branched-chain amino acids. Catalyzes the dehydration of (2R,3R)-2,3-dihydroxy-3-methylpentanoate (2,3-dihydroxy-3-methylvalerate) into 2-oxo-3-methylpentanoate (2-oxo-3-methylvalerate) and of (2R)-2,3-dihydroxy-3-methylbutanoate (2,3-dihydroxyisovalerate) into 2-oxo-3-methylbutanoate (2-oxoisovalerate), the penultimate precursor to L-isoleucine and L-valine, respectively. In Escherichia coli O157:H7 (strain EC4115 / EHEC), this protein is Dihydroxy-acid dehydratase.